Here is a 145-residue protein sequence, read N- to C-terminus: Salt stress-induced protein (145 aa).

Positions 3-145 (LVKIGLWGGN…IDAIGIYVHP (143 aa)) constitute a Jacalin-type lectin domain. Tandem repeats lie at residues 6-15 (IGLWGGNGGS) and 54-64 (IGPWGGGEGTS). The interval 6–64 (IGLWGGNGGSAQDISVPPKKLLGVTIYSSDAIRSIAFNYIGVDGQEYAIGPWGGGEGTS) is 2 X approximate repeats, Gly-rich.

Sheaths and roots from mature plants and seedlings.

The chain is Salt stress-induced protein (SALT) from Oryza sativa subsp. indica (Rice).